A 496-amino-acid chain; its full sequence is MKYQDLRDFIVQLEERGELKRISAPVDTHLEMTEIADRVLRAGGPALLFEQPVTRGVAQAMPVLANLFGTPQRVALGMGEELADGDWQTPLREVGSLLAFLKEPEPPKGFRDAWEKLPVFRQVLNMAPKEVRSAPCQEVVWEGADVDLARLPIQHCWPGDVAPLITWGLVVTRGPGKKRQNLGIYRQQVLSRDRVIMRWLAHRGGALDFRDHQQASSGEAFPVAVVLGCDPATILGAVTPVPDSLSEYQFAGLLRGAKTELVKCMGSDLQVPASAEIVLEGVIHPGDTAAEGPYGDHTGYYNEVSEFPVFTIDRITMRRDPIYHSTYTGKPPDEPAMLGLALNEVFVPLLQRQYPEIVDFYLPPEGCSYRLAVVSIRKQYPGHAKRVMFGIWSFLRQFMYTKFIIVVDDDVAIRDWKEVIWALTTRVDATRDTVLVDNTPIDYLDFASPVASLGSKMGLDATNKWPGETTREWGRPIVMDDVVKARVDAMWDELGL.

Residue N181 coordinates Mn(2+). Residues 184 to 186 (IYR), 198 to 200 (RWL), and 203 to 204 (RG) contribute to the prenylated FMN site. A Mn(2+)-binding site is contributed by E247. The active-site Proton donor is D296.

Belongs to the UbiD family. As to quaternary structure, homohexamer. The cofactor is prenylated FMN. Mn(2+) serves as cofactor.

Its subcellular location is the cell membrane. It carries out the reaction a 4-hydroxy-3-(all-trans-polyprenyl)benzoate + H(+) = a 2-(all-trans-polyprenyl)phenol + CO2. The protein operates within cofactor biosynthesis; ubiquinone biosynthesis. Its function is as follows. Catalyzes the decarboxylation of 3-octaprenyl-4-hydroxy benzoate to 2-octaprenylphenol, an intermediate step in ubiquinone biosynthesis. The protein is 3-octaprenyl-4-hydroxybenzoate carboxy-lyase of Aromatoleum aromaticum (strain DSM 19018 / LMG 30748 / EbN1) (Azoarcus sp. (strain EbN1)).